The chain runs to 255 residues: Large ribosomal subunit protein uL4 (255 aa).

The protein belongs to the universal ribosomal protein uL4 family. As to quaternary structure, part of the 50S ribosomal subunit.

Functionally, one of the primary rRNA binding proteins, this protein initially binds near the 5'-end of the 23S rRNA. It is important during the early stages of 50S assembly. It makes multiple contacts with different domains of the 23S rRNA in the assembled 50S subunit and ribosome. Forms part of the polypeptide exit tunnel. The polypeptide is Large ribosomal subunit protein uL4 (Thermococcus gammatolerans (strain DSM 15229 / JCM 11827 / EJ3)).